The following is a 717-amino-acid chain: HHIP-like protein 2 (717 aa).

Positions 1-40 (MLGKHTSPHTVPGHRAPWLSPGIFCLGLPFLLGWVGLLQG) are cleaved as a signal peptide. Intrachain disulfides connect Cys-203-Cys-545, Cys-207-Cys-551, Cys-423-Cys-441, and Cys-508-Cys-607. The segment at 642–717 (ARKASNATFT…MRQAAGRSHP (76 aa)) is disordered. Polar residues predominate over residues 646–662 (SNATFTSSSDRVASQKG). N-linked (GlcNAc...) asparagine glycosylation is present at Asn-647. Basic residues predominate over residues 672 to 687 (SSKKTFRRPGTKKKSR).

It belongs to the HHIP family.

It is found in the secreted. This chain is HHIP-like protein 2 (Hhipl2), found in Mus musculus (Mouse).